The primary structure comprises 471 residues: Probable flavin-containing monoamine oxidase B (471 aa).

Residue C406 is modified to S-8alpha-FAD cysteine.

This sequence belongs to the flavin monoamine oxidase family. It depends on FAD as a cofactor.

It carries out the reaction a secondary aliphatic amine + O2 + H2O = a primary amine + an aldehyde + H2O2. This Dictyostelium discoideum (Social amoeba) protein is Probable flavin-containing monoamine oxidase B (maoB-1).